Reading from the N-terminus, the 330-residue chain is Phenylalanine--tRNA ligase alpha subunit (330 aa).

Residue Glu257 coordinates Mg(2+).

This sequence belongs to the class-II aminoacyl-tRNA synthetase family. Phe-tRNA synthetase alpha subunit type 1 subfamily. Tetramer of two alpha and two beta subunits. The cofactor is Mg(2+).

The protein resides in the cytoplasm. It carries out the reaction tRNA(Phe) + L-phenylalanine + ATP = L-phenylalanyl-tRNA(Phe) + AMP + diphosphate + H(+). In Nostoc sp. (strain PCC 7120 / SAG 25.82 / UTEX 2576), this protein is Phenylalanine--tRNA ligase alpha subunit.